The chain runs to 681 residues: Methionine--tRNA ligase (681 aa).

Residues 18 to 28 carry the 'HIGH' region motif; sequence PYANGSIHLGH. Residues cysteine 149, cysteine 152, cysteine 162, and cysteine 165 each contribute to the Zn(2+) site. The 'KMSKS' region motif lies at 334 to 338; it reads KMSKS. Residue lysine 337 coordinates ATP. The tRNA-binding domain maps to 580-681; that stretch reads DFAKLDLRIV…NGAEPGQRVS (102 aa).

This sequence belongs to the class-I aminoacyl-tRNA synthetase family. MetG type 1 subfamily. Homodimer. Zn(2+) serves as cofactor.

It is found in the cytoplasm. It catalyses the reaction tRNA(Met) + L-methionine + ATP = L-methionyl-tRNA(Met) + AMP + diphosphate. Its function is as follows. Is required not only for elongation of protein synthesis but also for the initiation of all mRNA translation through initiator tRNA(fMet) aminoacylation. The polypeptide is Methionine--tRNA ligase (Chromohalobacter salexigens (strain ATCC BAA-138 / DSM 3043 / CIP 106854 / NCIMB 13768 / 1H11)).